We begin with the raw amino-acid sequence, 266 residues long: Apolipoprotein A-I (266 aa).

The N-terminal stretch at 1–18 (MKAVVLTLAVLFLTGSQA) is a signal peptide. 2 tandem repeats follow at residues 67 to 88 (LKLLDNWDSLTTSFSKLREQLG) and 89 to 110 (PVTQEFWDNLEKETEALRQEMN). A 10 X approximate tandem repeats region spans residues 67–266 (LKLLDNWDSL…EEASKKLNAQ (200 aa)). Residue Met109 is modified to Methionine sulfoxide. A 3; half-length repeat occupies 111–121 (KDVEEMKTKVQ). Repeat copies occupy residues 122–143 (PYLDEFQKKWQEEVELYRQKVE), 144–165 (PLGSELREGARQKLQELQEKLS), 166–187 (PLGEELRDRARTHVDSLRTQLA), 188–209 (PYSEELRQRLASRLEALKESGG), and 210–231 (ASLADYHAKASEQLSALSEKAK). Residues 232–242 (PALEDLRQGLL) form a 9; half-length repeat. Repeat 10 spans residues 243-266 (PVLESFKVSLLSALEEASKKLNAQ).

It belongs to the apolipoprotein A1/A4/E family. As to quaternary structure, homodimer. Interacts with APOA1BP and CLU. Component of a sperm activating protein complex (SPAP), consisting of APOA1, an immunoglobulin heavy chain, an immunoglobulin light chain and albumin. Interacts with NDRG1. Interacts with SCGB3A2. Interacts with NAXE and YJEFN3. In terms of processing, glycosylated. Palmitoylated. Post-translationally, phosphorylation sites are present in the extracellular medium. As to expression, major protein of plasma HDL, also found in chylomicrons.

The protein resides in the secreted. Participates in the reverse transport of cholesterol from tissues to the liver for excretion by promoting cholesterol efflux from tissues and by acting as a cofactor for the lecithin cholesterol acyltransferase (LCAT). As part of the SPAP complex, activates spermatozoa motility. The polypeptide is Apolipoprotein A-I (APOA1) (Carlito syrichta (Philippine tarsier)).